A 2023-amino-acid chain; its full sequence is Protein Daple (2023 aa).

One can recognise a Calponin-homology (CH) domain in the interval 11 to 131; the sequence is NFMDSPLVVW…RMLLLILGCA (121 aa). 3 coiled-coil regions span residues 250–415, 458–1064, and 1105–1419; these read RQHL…LLEE, NESA…VEKN, and LKQI…QYKF. Residues 1013–1035 are disordered; sequence RHEEEAAHSEISQQTLGQTRSLP. Residues 1022-1033 show a composition bias toward polar residues; that stretch reads EISQQTLGQTRS. Disordered regions lie at residues 1441–1824 and 1837–2023; these read KPKK…GSAS and LRSN…YGCV. Over residues 1442 to 1460 the composition is skewed to basic and acidic residues; that stretch reads PKKESSRERPDAPRERIRS. The segment covering 1478–1491 has biased composition (pro residues); that stretch reads SAPPPPPPPLPPRQ. Polar residues-rich tracts occupy residues 1497–1518 and 1564–1585; these read DSMNSQSVEENHVQSPTLSSPA and TCSTPLSRNSHNAPGFTSSSSL. Low complexity-rich tracts occupy residues 1623–1643 and 1667–1704; these read SAEFSRNTSSSNSPVSSKGSL and RLSQSSLLPRSSTLPCDSPSASRPSQRPASRRPSSPGS. Residues 1700 to 1728 carry the GBA motif; that stretch reads SSPGSEMVTLEEFLQESNALSPPTVQTGS. 4 stretches are compositionally biased toward polar residues: residues 1714–1727, 1752–1763, 1785–1799, and 1809–1824; these read QESNALSPPTVQTG, TPTNYVTPTVKT, LTDTSTPPSHSQTLP, and ALQQSSPRGSVGGSAS. A compositionally biased stretch (basic and acidic residues) spans 1890 to 1904; that stretch reads VDPRRLSLAQPRDEF. The segment covering 1927-1945 has biased composition (low complexity); that stretch reads GSGSSRAGAARSGSAQPRG. Residues 1974–1988 show a composition bias toward basic and acidic residues; the sequence is QEQREAESPLLKKAD. The segment covering 1989–2014 has biased composition (polar residues); the sequence is TTNLSYASKEQPTSKPASPDPNNDPQ. The PDZ-binding signature appears at 2020–2023; sequence YGCV.

It belongs to the CCDC88 family.

It is found in the cytoplasm. It localises to the cell junction. Functionally, positive regulator of Wnt signaling, acting synergistically with dvl2. Functions upstream of ctnnb1/beta-catenin in the canonical Wnt pathway, and also activates jnk in the Wnt/planar cell polarity (PCP) pathway. Acts as a non-receptor guanine nucleotide exchange factor which binds to and activates guanine nucleotide-binding protein G(i) alpha (Gi-alpha) subunits. This promotes apical cell constriction and subsequent bending of the neural plate during neurulation via arhgef18. The chain is Protein Daple from Danio rerio (Zebrafish).